Consider the following 1019-residue polypeptide: Collagen alpha-1(VI) chain (1019 aa).

The signal sequence occupies residues methionine 1–alanine 19. One can recognise a VWFA 1 domain in the interval aspartate 37–isoleucine 233. Asparagine 212 carries an N-linked (GlcNAc...) asparagine glycan. The disordered stretch occupies residues phenylalanine 248–glycine 588. Pro residues predominate over residues proline 253 to aspartate 262. 2 stretches are compositionally biased toward basic and acidic residues: residues lysine 299–lysine 332 and glycine 370–proline 380. Over residues glutamate 427 to aspartate 436 the composition is skewed to low complexity. Residues arginine 476 to aspartate 478 carry the Cell attachment site motif. A glycan (N-linked (GlcNAc...) asparagine) is linked at asparagine 514. The short motif at arginine 529–aspartate 531 is the Cell attachment site element. The N-linked (GlcNAc...) asparagine glycan is linked to asparagine 535. Residues arginine 577 to glycine 588 show a composition bias toward pro residues. VWFA domains follow at residues aspartate 613–isoleucine 800 and aspartate 824–valine 1012. Residues asparagine 799 and asparagine 887 are each glycosylated (N-linked (GlcNAc...) asparagine).

The protein belongs to the type VI collagen family. As to quaternary structure, trimers composed of three different chains: alpha 1(VI), alpha 2(VI), and alpha 3(VI). In terms of processing, prolines at the third position of the tripeptide repeating unit (G-X-Y) are hydroxylated in some or all of the chains.

Its subcellular location is the secreted. It is found in the extracellular space. The protein resides in the extracellular matrix. Collagen VI acts as a cell-binding protein. The sequence is that of Collagen alpha-1(VI) chain (COL6A1) from Gallus gallus (Chicken).